The sequence spans 147 residues: MKDIVSQVKDIAQKICEEFHLELFDVKYYNKSGRWFLEIIIDNPYDYISTKDCENVSRKLEFELDKINIIPNKYYLTVSSPGLNRPLRNVKDFERFTGKKAKIKTRENTYIGYIKNVVDNIITFETDGKFIEFKFEEIKKANLEIDI.

This sequence belongs to the RimP family.

It is found in the cytoplasm. Its function is as follows. Required for maturation of 30S ribosomal subunits. The protein is Ribosome maturation factor RimP of Thermosipho melanesiensis (strain DSM 12029 / CIP 104789 / BI429).